A 168-amino-acid polypeptide reads, in one-letter code: Ribosome-binding factor A (168 aa).

Residues 125-138 (RVREGAKHAGDSDP) show a composition bias toward basic and acidic residues. Residues 125-168 (RVREGAKHAGDSDPYRVLGEGDLEGPATGGPDVEDEGGANSHDR) are disordered.

It belongs to the RbfA family. Monomer. Binds 30S ribosomal subunits, but not 50S ribosomal subunits or 70S ribosomes.

It is found in the cytoplasm. In terms of biological role, one of several proteins that assist in the late maturation steps of the functional core of the 30S ribosomal subunit. Associates with free 30S ribosomal subunits (but not with 30S subunits that are part of 70S ribosomes or polysomes). Required for efficient processing of 16S rRNA. May interact with the 5'-terminal helix region of 16S rRNA. In Mycolicibacterium gilvum (strain PYR-GCK) (Mycobacterium gilvum (strain PYR-GCK)), this protein is Ribosome-binding factor A.